Reading from the N-terminus, the 889-residue chain is Coatomer subunit beta' (889 aa).

6 WD repeats span residues 11–41 (NRSD…ELWN), 53–83 (VTET…RVFN), 95–125 (AHPD…KLWN), 138–169 (GHEH…KVWS), 182–214 (GQER…KIWD), and 226–256 (GHMS…KIWN). Serine 326 bears the Phosphoserine mark. The disordered stretch occupies residues 806–889 (CGAEGLPGSS…AVPEPVEEES (84 aa)). Residues 836-864 (DENKEAEVEDSEFKESNSEAVEAEKKEEE) show a composition bias toward basic and acidic residues. The span at 866–879 (PQQQQSEQQPEQGE) shows a compositional bias: low complexity.

The protein belongs to the WD repeat COPB2 family. Oligomeric complex that consists of at least the alpha, beta, beta', gamma, delta, epsilon and zeta subunits. Interacts with the ESCRT-0 subunit VPS27.

Its subcellular location is the cytoplasm. The protein resides in the golgi apparatus membrane. The protein localises to the cytoplasmic vesicle. It is found in the COPI-coated vesicle membrane. Its function is as follows. The coatomer is a cytosolic protein complex that binds to dilysine motifs and reversibly associates with Golgi non-clathrin-coated vesicles, which further mediate biosynthetic protein transport from the ER, via the Golgi up to the trans Golgi network. Coatomer complex is required for budding from Golgi membranes, and is essential for the retrograde Golgi-to-ER transport of dilysine-tagged proteins. The sequence is that of Coatomer subunit beta' (SEC27) from Saccharomyces cerevisiae (strain ATCC 204508 / S288c) (Baker's yeast).